The sequence spans 773 residues: Beta-hexosaminidase B (773 aa).

A signal peptide spans 1–19 (MKFNRLMALLFGVSSPLYA). 3 disulfide bridges follow: C46–C53, C389–C397, and C496–C542. Catalysis depends on E531, which acts as the Proton donor.

Belongs to the glycosyl hydrolase 20 family.

The enzyme catalyses Hydrolysis of terminal non-reducing N-acetyl-D-hexosamine residues in N-acetyl-beta-D-hexosaminides.. This Pseudoalteromonas piscicida protein is Beta-hexosaminidase B (nag096).